Reading from the N-terminus, the 153-residue chain is MSLDLALDIQHATTCDWLPTDEQFALWVTNAIGNSMNEAELTIRIVDSRESQMLNSTYRGKDKPTNVLSFPFEAPPEIELPLLGDLVICAAVVENEAREQQKTLEAHWAHMVVHGCLHLLGYDHIEDEEAEEMESLETQLIEGLGFTDPYKEQ.

Zn(2+) is bound by residues His-114, His-118, and His-124.

The protein belongs to the endoribonuclease YbeY family. Zn(2+) is required as a cofactor.

It is found in the cytoplasm. Functionally, single strand-specific metallo-endoribonuclease involved in late-stage 70S ribosome quality control and in maturation of the 3' terminus of the 16S rRNA. The chain is Endoribonuclease YbeY from Shewanella baltica (strain OS195).